A 526-amino-acid polypeptide reads, in one-letter code: Secreted triacylglycerol lipase LIP4 (526 aa).

The N-terminal stretch at 1 to 26 is a signal peptide; sequence MVRLSYVRFGVAWCIAIIIVSGFSNA. A glycan (N-linked (GlcNAc...) asparagine) is linked at asparagine 186. Serine 195 serves as the catalytic Nucleophile. An N-linked (GlcNAc...) asparagine glycan is attached at asparagine 228. Residues aspartate 342 and histidine 376 contribute to the active site. The N-linked (GlcNAc...) asparagine glycan is linked to asparagine 377. Residues 412–526 form a disordered region; the sequence is TGPSASSSAG…TMPAPPLMER (115 aa). 2 stretches are compositionally biased toward low complexity: residues 413–423 and 430–457; these read GPSASSSAGGP and TGGH…HAPA. N-linked (GlcNAc...) asparagine glycosylation occurs at asparagine 462. The segment covering 480–490 has biased composition (low complexity); it reads PSTGATSPAPS. Over residues 516–526 the composition is skewed to pro residues; the sequence is RTMPAPPLMER.

The protein belongs to the AB hydrolase superfamily. Lipase family. Class Lip subfamily.

The protein resides in the secreted. It catalyses the reaction a triacylglycerol + H2O = a diacylglycerol + a fatty acid + H(+). It carries out the reaction a monoacylglycerol + H2O = glycerol + a fatty acid + H(+). The catalysed reaction is a diacylglycerol + H2O = a monoacylglycerol + a fatty acid + H(+). In terms of biological role, secreted lipase that hydrolyzes acylglycerol lipids such as triacylglycerols and consequently releases free fatty acid. Can hydrolyze 4-nitrophenyl palmitate to release 4-nitrophenol and palmitoic acid. Due to an absence of fatty acid synthase genes in Malassezia species, secretory lipases are essential for the yeast to generate free fatty acids from degradation of sebum and assimilate them as lipid sources for growth. Plays important roles not only in lipid metabolism but also in the immune response of host cells and pathogenesis. In Malassezia furfur (Pityriasis versicolor infection agent), this protein is Secreted triacylglycerol lipase LIP4.